The chain runs to 860 residues: Leucine--tRNA ligase (860 aa).

The 'HIGH' region signature appears at 42-52 (PYPSGRLHMGH). A 'KMSKS' region motif is present at residues 619–623 (KMSKS). K622 contributes to the ATP binding site.

The protein belongs to the class-I aminoacyl-tRNA synthetase family.

The protein localises to the cytoplasm. The catalysed reaction is tRNA(Leu) + L-leucine + ATP = L-leucyl-tRNA(Leu) + AMP + diphosphate. This chain is Leucine--tRNA ligase, found in Pasteurella multocida (strain Pm70).